A 488-amino-acid chain; its full sequence is Putative BTB/POZ domain-containing protein L674 (488 aa).

The region spanning 83–150 (NIVYFNIGGK…VKNQKCPINN (68 aa)) is the BTB domain.

The protein belongs to the mimivirus BTB/WD family.

This Acanthamoeba polyphaga (Amoeba) protein is Putative BTB/POZ domain-containing protein L674.